The primary structure comprises 68 residues: Conotoxin tx3b (68 aa).

Residues 1–19 (MSKLGALLTICLLLFSLTA) form the signal peptide. A propeptide spanning residues 20-52 (VPLDGDQHADQPAQRLQDRIPTEDHPLFDPNKR) is cleaved from the precursor. Intrachain disulfides connect Cys53/Cys67, Cys54/Cys63, and Cys59/Cys66. The residue at position 61 (Met61) is a Methionine sulfoxide; partial. Position 67 is a cysteine amide (Cys67).

As to expression, expressed by the venom duct.

It localises to the secreted. Functionally, intracranial injection into mice causes scratching, hyperactivity and circular motion. The polypeptide is Conotoxin tx3b (Conus textile (Cloth-of-gold cone)).